A 293-amino-acid chain; its full sequence is Glutamyl-Q tRNA(Asp) synthetase (293 aa).

L-glutamate-binding positions include 8–12 (RFAPS) and E44. The short motif at 11–21 (PSPSGPLHAGS) is the 'HIGH' region element. Zn(2+) contacts are provided by C98, C100, Y120, and C124. L-glutamate is bound by residues Y183 and R201. Residues 239–243 (KLSKQ) carry the 'KMSKS' region motif. K242 is an ATP binding site.

It belongs to the class-I aminoacyl-tRNA synthetase family. GluQ subfamily. Zn(2+) is required as a cofactor.

In terms of biological role, catalyzes the tRNA-independent activation of glutamate in presence of ATP and the subsequent transfer of glutamate onto a tRNA(Asp). Glutamate is transferred on the 2-amino-5-(4,5-dihydroxy-2-cyclopenten-1-yl) moiety of the queuosine in the wobble position of the QUC anticodon. This Janthinobacterium sp. (strain Marseille) (Minibacterium massiliensis) protein is Glutamyl-Q tRNA(Asp) synthetase.